Consider the following 291-residue polypeptide: F-box/kelch-repeat protein At5g38670 (291 aa).

The F-box domain occupies 5–51 (TNPNPSLPDDLILSCVARVSRLYYPALSLVSKSFRSLIASPELYKTR). Kelch repeat units lie at residues 46-91 (ELYK…VLDE), 92-140 (KIYV…RFDG), 142-187 (LHLV…WYTI), and 189-232 (KGDI…YGGK).

This Arabidopsis thaliana (Mouse-ear cress) protein is F-box/kelch-repeat protein At5g38670.